Reading from the N-terminus, the 61-residue chain is Large ribosomal subunit protein bL28 (61 aa).

Residues M1–R26 form a disordered region.

It belongs to the bacterial ribosomal protein bL28 family.

This chain is Large ribosomal subunit protein bL28, found in Pediococcus pentosaceus (strain ATCC 25745 / CCUG 21536 / LMG 10740 / 183-1w).